A 419-amino-acid chain; its full sequence is Phosphoribosylamine--glycine ligase (419 aa).

An ATP-grasp domain is found at 109–311; the sequence is KQLLIEAGVP…LEKVLMACVE (203 aa). Residue 135–191 coordinates ATP; sequence ATKMGAPIVVKADGLAAGKGVIVAQTSAEATTAIAELFDQGFEKIVVEEFLPGEEVS. Mg(2+)-binding residues include E281 and N283.

The protein belongs to the GARS family. Mg(2+) serves as cofactor. Requires Mn(2+) as cofactor.

The catalysed reaction is 5-phospho-beta-D-ribosylamine + glycine + ATP = N(1)-(5-phospho-beta-D-ribosyl)glycinamide + ADP + phosphate + H(+). Its pathway is purine metabolism; IMP biosynthesis via de novo pathway; N(1)-(5-phospho-D-ribosyl)glycinamide from 5-phospho-alpha-D-ribose 1-diphosphate: step 2/2. The protein is Phosphoribosylamine--glycine ligase of Synechocystis sp. (strain ATCC 27184 / PCC 6803 / Kazusa).